The chain runs to 806 residues: Leucine--tRNA ligase (806 aa).

A 'HIGH' region motif is present at residues 40–51; it reads PYPSGTGLHVGH. Residues 576 to 580 carry the 'KMSKS' region motif; the sequence is KMSKS. Position 579 (Lys-579) interacts with ATP.

The protein belongs to the class-I aminoacyl-tRNA synthetase family.

Its subcellular location is the cytoplasm. The enzyme catalyses tRNA(Leu) + L-leucine + ATP = L-leucyl-tRNA(Leu) + AMP + diphosphate. The protein is Leucine--tRNA ligase of Prosthecochloris aestuarii (strain DSM 271 / SK 413).